The sequence spans 229 residues: Transmembrane emp24 domain-containing protein 5 (229 aa).

The first 27 residues, 1–27 (MGDKIWLPFPVLLLAALPPVLLPGAAG), serve as a signal peptide directing secretion. The Lumenal portion of the chain corresponds to 28–196 (FTPSLDSDFT…IQESNFDRVN (169 aa)). The 82-residue stretch at 45-126 (RECFYQPMPL…EKVIFFELIL (82 aa)) folds into the GOLD domain. A helical transmembrane segment spans residues 197-217 (FWSMVNLVVMVVVSAIQVYML). The Cytoplasmic portion of the chain corresponds to 218-229 (KSLFEDKRKSRT).

The protein belongs to the EMP24/GP25L family. As to quaternary structure, interacts with TMED9 and TMED10.

It localises to the endoplasmic reticulum membrane. Its subcellular location is the golgi apparatus. The protein localises to the cis-Golgi network membrane. It is found in the endoplasmic reticulum-Golgi intermediate compartment membrane. Functionally, potential role in vesicular protein trafficking, mainly in the early secretory pathway. Required for the maintenance of the Golgi apparatus; involved in protein exchange between Golgi stacks during assembly. Probably not required for COPI-vesicle-mediated retrograde transport. This chain is Transmembrane emp24 domain-containing protein 5 (TMED5), found in Pongo abelii (Sumatran orangutan).